The primary structure comprises 208 residues: Transmembrane protein 222 (208 aa).

The disordered stretch occupies residues Met1 to Ala26. Over Met1 to Cys55 the chain is Extracellular. Residues Val56–Ile76 form a helical membrane-spanning segment. The Cytoplasmic portion of the chain corresponds to Cys77–Asn164. The chain crosses the membrane as a helical span at residues Met165–Val185. Position 186 (Lys186) is a topological domain, extracellular. The chain crosses the membrane as a helical span at residues Thr187–Leu207. Residue Arg208 is a topological domain, cytoplasmic.

In terms of tissue distribution, widely expressed. The highest expression is observed in the brain.

Its subcellular location is the membrane. It localises to the cell projection. The protein localises to the dendrite. This chain is Transmembrane protein 222 (TMEM222), found in Homo sapiens (Human).